A 325-amino-acid polypeptide reads, in one-letter code: Glutarate 2-hydroxylase (325 aa).

Fe cation contacts are provided by H160, D162, and H292.

It belongs to the glutarate hydroxylase family. Homotetramer. Fe(2+) serves as cofactor.

It carries out the reaction glutarate + 2-oxoglutarate + O2 = (S)-2-hydroxyglutarate + succinate + CO2. It participates in amino-acid degradation. Acts as an alpha-ketoglutarate-dependent dioxygenase catalyzing hydroxylation of glutarate (GA) to L-2-hydroxyglutarate (L2HG). Functions in a L-lysine degradation pathway that proceeds via cadaverine, glutarate and L-2-hydroxyglutarate. In Salmonella newport (strain SL254), this protein is Glutarate 2-hydroxylase.